A 244-amino-acid chain; its full sequence is Isoprenyl transferase (244 aa).

Asp23 is an active-site residue. Residue Asp23 participates in Mg(2+) binding. Substrate contacts are provided by residues 24-27, Trp28, Arg36, His40, and 68-70; these read GNGR and STE. Asn71 functions as the Proton acceptor in the catalytic mechanism. Residues Trp72, Arg74, Arg191, and 197–199 each bind substrate; that span reads RMS. Residue Glu210 participates in Mg(2+) binding.

This sequence belongs to the UPP synthase family. In terms of assembly, homodimer. Requires Mg(2+) as cofactor.

Its function is as follows. Catalyzes the condensation of isopentenyl diphosphate (IPP) with allylic pyrophosphates generating different type of terpenoids. The sequence is that of Isoprenyl transferase from Lactococcus lactis subsp. lactis (strain IL1403) (Streptococcus lactis).